Reading from the N-terminus, the 193-residue chain is Rho-related protein racF1 (193 aa).

10–17 is a binding site for GTP; that stretch reads GDGAVGKT. An Effector region motif is present at residues 32–40; sequence YIPTVFDNY. GTP-binding positions include 57–61 and 115–118; these read DTAGQ and TKQD. Cys190 bears the Cysteine methyl ester mark. Residue Cys190 is the site of S-geranylgeranyl cysteine attachment. Residues 191–193 constitute a propeptide, removed in mature form; that stretch reads TIM.

This sequence belongs to the small GTPase superfamily. Rho family. In terms of assembly, interacts with pakB.

Its subcellular location is the membrane. Functionally, might act in concert and/or share functions with other members of the RHO family in the regulation of a subset of cytoskeletal rearrangements that are required for these processes. This chain is Rho-related protein racF1 (racF1), found in Dictyostelium discoideum (Social amoeba).